The sequence spans 66 residues: Small ribosomal subunit protein eS30 (66 aa).

The segment at 1–35 is disordered; sequence MGKVHGGLNRAGKVRNATPKKDKEEKRKPKVGRAK.

This sequence belongs to the eukaryotic ribosomal protein eS30 family.

In Dictyostelium discoideum (Social amoeba), this protein is Small ribosomal subunit protein eS30 (rps30-1).